A 733-amino-acid polypeptide reads, in one-letter code: Neutral ceramidase 3 (733 aa).

Residues Met-1–Ser-25 form the signal peptide. Ser-307 functions as the Nucleophile in the catalytic mechanism. Residue Asn-325 is glycosylated (N-linked (GlcNAc...) asparagine).

It belongs to the neutral ceramidase family.

Its subcellular location is the secreted. The protein resides in the endoplasmic reticulum. It is found in the golgi apparatus. It catalyses the reaction an N-acylsphing-4-enine + H2O = sphing-4-enine + a fatty acid. In terms of biological role, hydrolyzes the sphingolipid ceramide into sphingosine and free fatty acid. Promotes oxidative stress resistance. The sequence is that of Neutral ceramidase 3 from Arabidopsis thaliana (Mouse-ear cress).